We begin with the raw amino-acid sequence, 210 residues long: ATP-dependent Clp protease proteolytic subunit 1 (210 aa).

Residue S106 is the Nucleophile of the active site. The active site involves H131.

Belongs to the peptidase S14 family. Fourteen ClpP subunits assemble into 2 heptameric rings which stack back to back to give a disk-like structure with a central cavity, resembling the structure of eukaryotic proteasomes.

The protein resides in the cytoplasm. The enzyme catalyses Hydrolysis of proteins to small peptides in the presence of ATP and magnesium. alpha-casein is the usual test substrate. In the absence of ATP, only oligopeptides shorter than five residues are hydrolyzed (such as succinyl-Leu-Tyr-|-NHMec, and Leu-Tyr-Leu-|-Tyr-Trp, in which cleavage of the -Tyr-|-Leu- and -Tyr-|-Trp bonds also occurs).. Its function is as follows. Cleaves peptides in various proteins in a process that requires ATP hydrolysis. Has a chymotrypsin-like activity. Plays a major role in the degradation of misfolded proteins. The chain is ATP-dependent Clp protease proteolytic subunit 1 from Chelativorans sp. (strain BNC1).